Reading from the N-terminus, the 304-residue chain is MEPLIGMGVLALIGVAATIAGASEDLESDVGSQSNPNSQVQLAPQMMFPHRIFNKAVSGEPPSNALMCSVGAAVATVLISEFTLSPLFALVLGALIAACVHGTFAVTSTMGRAASQSRFKQPVYLDMIRSHTPVIMGYSFITTFCILVVSYLMTVVLGHPFPLTMLAFIWGITVGAIGSSTGDVHYGAEREFQQFEFGSGLNASNSGNIVRYGESGVRNGYDNSWFCAKFGGPVTGMAFGMTVFLGSWVTTVFDPAVSISRGWISVVAGVIIVLILIFWNWKIEVKARNAYGPYKEDKTEEASA.

6 helical membrane-spanning segments follow: residues 3–23 (PLIG…AGAS), 86–106 (PLFA…TFAV), 131–151 (HTPV…VVSY), 152–172 (LMTV…IWGI), 233–253 (PVTG…TTVF), and 263–283 (WISV…NWKI).

The protein belongs to the MtrE family. In terms of assembly, the complex is composed of 8 subunits; MtrA, MtrB, MtrC, MtrD, MtrE, MtrF, MtrG and MtrH.

The protein resides in the cell membrane. The enzyme catalyses 5-methyl-5,6,7,8-tetrahydromethanopterin + coenzyme M + 2 Na(+)(in) = 5,6,7,8-tetrahydromethanopterin + methyl-coenzyme M + 2 Na(+)(out). Its pathway is one-carbon metabolism; methanogenesis from CO(2); methyl-coenzyme M from 5,10-methylene-5,6,7,8-tetrahydromethanopterin: step 2/2. Its function is as follows. Part of a complex that catalyzes the formation of methyl-coenzyme M and tetrahydromethanopterin from coenzyme M and methyl-tetrahydromethanopterin. This is an energy-conserving, sodium-ion translocating step. This is Tetrahydromethanopterin S-methyltransferase subunit E from Methanosarcina acetivorans (strain ATCC 35395 / DSM 2834 / JCM 12185 / C2A).